We begin with the raw amino-acid sequence, 442 residues long: tRNA-2-methylthio-N(6)-dimethylallyladenosine synthase (442 aa).

Positions 5–122 (KKVFIKTLGC…LPEMIKRKQS (118 aa)) constitute an MTTase N-terminal domain. Cysteine 14, cysteine 51, cysteine 85, cysteine 159, cysteine 163, and cysteine 166 together coordinate [4Fe-4S] cluster. The Radical SAM core domain maps to 145-378 (KAEGAKAYVS…DLLNSNAQII (234 aa)). The TRAM domain maps to 380–442 (RQMVGTEQRI…LPNSLRGELI (63 aa)).

This sequence belongs to the methylthiotransferase family. MiaB subfamily. As to quaternary structure, monomer. [4Fe-4S] cluster serves as cofactor.

The protein localises to the cytoplasm. It carries out the reaction N(6)-dimethylallyladenosine(37) in tRNA + (sulfur carrier)-SH + AH2 + 2 S-adenosyl-L-methionine = 2-methylsulfanyl-N(6)-dimethylallyladenosine(37) in tRNA + (sulfur carrier)-H + 5'-deoxyadenosine + L-methionine + A + S-adenosyl-L-homocysteine + 2 H(+). Catalyzes the methylthiolation of N6-(dimethylallyl)adenosine (i(6)A), leading to the formation of 2-methylthio-N6-(dimethylallyl)adenosine (ms(2)i(6)A) at position 37 in tRNAs that read codons beginning with uridine. The sequence is that of tRNA-2-methylthio-N(6)-dimethylallyladenosine synthase from Francisella philomiragia subsp. philomiragia (strain ATCC 25017 / CCUG 19701 / FSC 153 / O#319-036).